The chain runs to 275 residues: NH(3)-dependent NAD(+) synthetase (275 aa).

An ATP-binding site is contributed by 46 to 53; the sequence is GISGGQDS. Asp-52 provides a ligand contact to Mg(2+). Arg-140 contributes to the deamido-NAD(+) binding site. Thr-160 serves as a coordination point for ATP. A Mg(2+)-binding site is contributed by Glu-165. Lys-173 and Asp-180 together coordinate deamido-NAD(+). ATP is bound by residues Lys-189 and Thr-211. A deamido-NAD(+)-binding site is contributed by 260–261; the sequence is HK.

This sequence belongs to the NAD synthetase family. In terms of assembly, homodimer.

It catalyses the reaction deamido-NAD(+) + NH4(+) + ATP = AMP + diphosphate + NAD(+) + H(+). It participates in cofactor biosynthesis; NAD(+) biosynthesis; NAD(+) from deamido-NAD(+) (ammonia route): step 1/1. Catalyzes the ATP-dependent amidation of deamido-NAD to form NAD. Uses ammonia as a nitrogen source. In Shigella boydii serotype 18 (strain CDC 3083-94 / BS512), this protein is NH(3)-dependent NAD(+) synthetase.